A 591-amino-acid polypeptide reads, in one-letter code: Developmental and secondary metabolism regulator VEA1 (591 aa).

A disordered region spans residues 1 to 22 (MATKASSILHPPNETEHTMSRI). Over residues 13–22 (NETEHTMSRI) the composition is skewed to basic and acidic residues. The Velvet domain occupies 26–235 (GKKLTYNLKV…AEQGCRVRIR (210 aa)). The short motif at 40–45 (ERARAC) is the Nuclear localization signal element. Residues 238 to 547 (VRMRRREPKP…TSGGSDDEIM (310 aa)) form a disordered region. The segment covering 245 to 260 (PKPNKDYGAYDDRRIT) has biased composition (basic and acidic residues). The span at 306-321 (HQQPSPNLAATPQSHL) shows a compositional bias: polar residues. The segment covering 330–347 (YHAPPPPPTAHPAPPPAY) has biased composition (pro residues). The segment covering 386–395 (YDQSKSSLPM) has biased composition (polar residues). Positions 422 to 433 (PSQLHPTQQYQQ) are enriched in low complexity. Over residues 434-448 (PTPPPPPPAAIAPHP) the composition is skewed to pro residues. Residues 452–493 (RTPTKPSPSTFFPPTPSRLSVEVDSSNEADDAILNAIRTRRG) form a PEST region. Over residues 494–516 (YILDEKSGATKRSRDSSDHDLKP) the composition is skewed to basic and acidic residues.

The protein belongs to the velvet family. VeA subfamily. In terms of assembly, component of the heterotrimeric velvet complex composed of LAE1, VEA1 and VEL2; VEA1 acting as a bridging protein between LAE1 and VEL2.

It is found in the nucleus. The protein resides in the cytoplasm. Functionally, component of the velvet transcription factor complex that controls sexual/asexual developmental ratio in response to light, promoting sexual development in the darkness while stimulating asexual sporulation under illumination. The velvet complex hat acts as a global regulator for secondary metabolite gene expression. Regulates cleistothecial formation and hyphal growth. Acts as a positive regulator of virulence. This chain is Developmental and secondary metabolism regulator VEA1, found in Ajellomyces capsulatus (Darling's disease fungus).